Consider the following 80-residue polypeptide: Protein CEBPZOS (80 aa).

The helical transmembrane segment at 15–31 (GVLAAELVGVAGAYCLF) threads the bilayer.

The protein resides in the mitochondrion membrane. In Mus musculus (Mouse), this protein is Protein CEBPZOS.